A 395-amino-acid polypeptide reads, in one-letter code: ATP phosphoribosyltransferase regulatory subunit (395 aa).

This sequence belongs to the class-II aminoacyl-tRNA synthetase family. HisZ subfamily. Heteromultimer composed of HisG and HisZ subunits.

The protein resides in the cytoplasm. Its pathway is amino-acid biosynthesis; L-histidine biosynthesis; L-histidine from 5-phospho-alpha-D-ribose 1-diphosphate: step 1/9. Functionally, required for the first step of histidine biosynthesis. May allow the feedback regulation of ATP phosphoribosyltransferase activity by histidine. The chain is ATP phosphoribosyltransferase regulatory subunit from Azotobacter vinelandii (strain DJ / ATCC BAA-1303).